Here is a 420-residue protein sequence, read N- to C-terminus: 3-phosphoshikimate 1-carboxyvinyltransferase (420 aa).

Residues M1 to G24 are disordered. 3-phosphoshikimate is bound by residues K26, S27, and R31. K26 contributes to the phosphoenolpyruvate binding site. Residues G97 and R125 each coordinate phosphoenolpyruvate. 3-phosphoshikimate contacts are provided by S170, S171, Q172, D297, N320, and K324. Phosphoenolpyruvate is bound at residue Q172. D297 serves as the catalytic Proton acceptor. Phosphoenolpyruvate is bound by residues R328, R375, and K400.

This sequence belongs to the EPSP synthase family. In terms of assembly, monomer.

The protein resides in the cytoplasm. It catalyses the reaction 3-phosphoshikimate + phosphoenolpyruvate = 5-O-(1-carboxyvinyl)-3-phosphoshikimate + phosphate. It functions in the pathway metabolic intermediate biosynthesis; chorismate biosynthesis; chorismate from D-erythrose 4-phosphate and phosphoenolpyruvate: step 6/7. In terms of biological role, catalyzes the transfer of the enolpyruvyl moiety of phosphoenolpyruvate (PEP) to the 5-hydroxyl of shikimate-3-phosphate (S3P) to produce enolpyruvyl shikimate-3-phosphate and inorganic phosphate. The polypeptide is 3-phosphoshikimate 1-carboxyvinyltransferase (Rhizobium etli (strain CIAT 652)).